Consider the following 231-residue polypeptide: ADP-ribosylation factor-like protein 6-interacting protein 4 (231 aa).

Residues 1 to 19 (MAHVSSRKRSRSRSRSRGR) are compositionally biased toward basic residues. The disordered stretch occupies residues 1-154 (MAHVSSRKRS…EDNDGPVLTD (154 aa)). Over residues 20 to 34 (RGSEKRSKRSSKDSS) the composition is skewed to basic and acidic residues. The segment covering 64 to 89 (TSRSSSSSSSSSSSSSSSSTSSSSSS) has biased composition (low complexity). Over residues 92 to 119 (RKKRGKHKDKKKRKKKKKRKKKMKRKGK) the composition is skewed to basic residues. Phosphoserine is present on residues Ser-142 and Ser-176. A Glycyl lysine isopeptide (Lys-Gly) (interchain with G-Cter in SUMO2) cross-link involves residue Lys-193.

This sequence belongs to the ARL6IP4 family. As to quaternary structure, interacts with ARL6. Interacts with ZCCHC17. Interacts with SRSF2.

The protein resides in the nucleus. The protein localises to the nucleolus. It localises to the nucleus speckle. Functionally, involved in modulating alternative pre-mRNA splicing with either 5' distal site activation or preferential use of 3' proximal site. This is ADP-ribosylation factor-like protein 6-interacting protein 4 (Arl6ip4) from Rattus norvegicus (Rat).